Here is a 250-residue protein sequence, read N- to C-terminus: Probable transcriptional regulatory protein Emin_1151 (250 aa).

Belongs to the TACO1 family.

It is found in the cytoplasm. The chain is Probable transcriptional regulatory protein Emin_1151 from Elusimicrobium minutum (strain Pei191).